A 441-amino-acid polypeptide reads, in one-letter code: MAAHFSGALQLTNLDDFITPSQECIKPVKIEKKPGAKGLAKIKIESDGSYVQLSEDGGKSKLQKAEITLNDCLACSGCITTAESVLITQQSQDELFKILDSNRKLVKEGKGDVQKLVVISISPQSRASIAAKFNLTINDAAKKLSAFFKQLGVHYVFDTTFARDFSLAESQREFVRRFRAYQQGDEGCTPMLASACPGWMCYAEKTHGDYILPYISSTKSPQQIMGSLVKDHLASVVGKSPDSVYHVCVMPCFDKKLEASRDDFYNDMYSTRDVDCVISTVEVETMIQDHCPDFNSIDPVELDKLYCSSDSGDFFGHSGGGSGGFLEHIFKYASRELFDEKVDVLTYKTLRNKDFREVTLQVDGKDVLKFAAAYGFRNIQNLVQKLKRGKSPYHFVEVMACPSGLKFLAQDLFGPTFYPTLEPRSLEKNVQQKNGVSCIFI.

7 residues coordinate [4Fe-4S] cluster: cysteine 24, cysteine 72, cysteine 75, cysteine 78, cysteine 196, cysteine 252, and cysteine 401.

It belongs to the NARF family.

In terms of biological role, component of the cytosolic iron-sulfur (Fe/S) protein assembly machinery. Required for maturation of extramitochondrial Fe/S proteins. The polypeptide is Probable cytosolic Fe-S cluster assembly factor v1g210509 (Nematostella vectensis (Starlet sea anemone)).